A 313-amino-acid polypeptide reads, in one-letter code: MTQPIVVAALYKFVTLEDYVALREPLLQAMVDNGIKGTLLIAEEGINGTVSGSREGIDGLMAWLKTDPRMVDIDHKESYCDDQPFYRTKVKLKKEIVTLGVEGVDPNKKVGTYVEPQDWNALISDPEVLLIDTRNDYEVSIGTFEGAIDPKTTSFREFPDYIKANFDPAKHKKVAMFCTGGIRCEKASSYMLSEGFDEVYHLKGGILKYLEEVPQEETKWQGDCFVFDNRVTVRHDLSEGDYDQCHACRTPVSVEDRASEHYVAGISCPHCWDKLPEKTRRSAIDRQKQIELAKARNMPHPIGFNYKQTPSEA.

The region spanning 124-218 (SDPEVLLIDT…YLEEVPQEET (95 aa)) is the Rhodanese domain. Cysteine 178 (cysteine persulfide intermediate) is an active-site residue.

The protein belongs to the TrhO family.

It carries out the reaction uridine(34) in tRNA + AH2 + O2 = 5-hydroxyuridine(34) in tRNA + A + H2O. Catalyzes oxygen-dependent 5-hydroxyuridine (ho5U) modification at position 34 in tRNAs. The sequence is that of tRNA uridine(34) hydroxylase from Pseudomonas fluorescens (strain SBW25).